The following is a 160-amino-acid chain: uncharacterized protein (160 aa).

The 145-residue stretch at 7 to 151 (LLINYKTLEE…NPLIWHPDMD (145 aa)) folds into the N-acetyltransferase domain.

This is an uncharacterized protein from Bacillus subtilis (strain 168).